A 225-amino-acid chain; its full sequence is Pyridoxine/pyridoxamine 5'-phosphate oxidase (225 aa).

Residues 9 to 12 (RVDY) and Lys-78 each bind substrate. Residues 73 to 78 (RTVLCK), 88 to 89 (YT), Lys-95, and Gln-117 each bind FMN. Residues Tyr-135, Arg-139, and Ser-143 each coordinate substrate. Residues 152–153 (QS) and Trp-198 each bind FMN. Residue 204–206 (RLH) participates in substrate binding. Residue Arg-208 coordinates FMN.

This sequence belongs to the pyridoxamine 5'-phosphate oxidase family. In terms of assembly, homodimer. The cofactor is FMN.

The catalysed reaction is pyridoxamine 5'-phosphate + O2 + H2O = pyridoxal 5'-phosphate + H2O2 + NH4(+). The enzyme catalyses pyridoxine 5'-phosphate + O2 = pyridoxal 5'-phosphate + H2O2. Its pathway is cofactor metabolism; pyridoxal 5'-phosphate salvage; pyridoxal 5'-phosphate from pyridoxamine 5'-phosphate: step 1/1. The protein operates within cofactor metabolism; pyridoxal 5'-phosphate salvage; pyridoxal 5'-phosphate from pyridoxine 5'-phosphate: step 1/1. In terms of biological role, catalyzes the oxidation of either pyridoxine 5'-phosphate (PNP) or pyridoxamine 5'-phosphate (PMP) into pyridoxal 5'-phosphate (PLP). The polypeptide is Pyridoxine/pyridoxamine 5'-phosphate oxidase (Nocardia farcinica (strain IFM 10152)).